The primary structure comprises 201 residues: Small ribosomal subunit protein uS4c (201 aa).

The disordered stretch occupies residues 15–43 (LGALPGLTNKRPRAGSDLRNQSRSGKRSQ). The region spanning 89–149 (MRLDNILFRL…DEQKSIALIQ (61 aa)) is the S4 RNA-binding domain.

Component of the chloroplast small ribosomal subunit (SSU). Mature 70S chloroplast ribosomes of higher plants consist of a small (30S) and a large (50S) subunit. The 30S small subunit contains 1 molecule of ribosomal RNA (16S rRNA) and 24 different proteins. The 50S large subunit contains 3 rRNA molecules (23S, 5S and 4.5S rRNA) and 33 different proteins.

The protein resides in the plastid. It is found in the chloroplast. Functionally, component of the chloroplast ribosome (chloro-ribosome), a dedicated translation machinery responsible for the synthesis of chloroplast genome-encoded proteins, including proteins of the transcription and translation machinery and components of the photosynthetic apparatus. The sequence is that of Small ribosomal subunit protein uS4c (rps4) from Spinacia oleracea (Spinach).